The chain runs to 227 residues: Phosphoribosylaminoimidazole-succinocarboxamide synthase (227 aa).

The protein belongs to the SAICAR synthetase family.

The enzyme catalyses 5-amino-1-(5-phospho-D-ribosyl)imidazole-4-carboxylate + L-aspartate + ATP = (2S)-2-[5-amino-1-(5-phospho-beta-D-ribosyl)imidazole-4-carboxamido]succinate + ADP + phosphate + 2 H(+). It participates in purine metabolism; IMP biosynthesis via de novo pathway; 5-amino-1-(5-phospho-D-ribosyl)imidazole-4-carboxamide from 5-amino-1-(5-phospho-D-ribosyl)imidazole-4-carboxylate: step 1/2. The polypeptide is Phosphoribosylaminoimidazole-succinocarboxamide synthase (Clostridium tetani (strain Massachusetts / E88)).